The chain runs to 398 residues: LL-diaminopimelate aminotransferase (398 aa).

Substrate contacts are provided by Y14 and G41. Residues Y71, 104–105, Y128, N174, Y205, and 233–235 contribute to the pyridoxal 5'-phosphate site; these read AK and SFS. K105, Y128, and N174 together coordinate substrate. K236 is modified (N6-(pyridoxal phosphate)lysine). Pyridoxal 5'-phosphate-binding residues include R244 and N275. Residues N275 and R368 each coordinate substrate.

It belongs to the class-I pyridoxal-phosphate-dependent aminotransferase family. LL-diaminopimelate aminotransferase subfamily. Homodimer. It depends on pyridoxal 5'-phosphate as a cofactor.

It carries out the reaction (2S,6S)-2,6-diaminopimelate + 2-oxoglutarate = (S)-2,3,4,5-tetrahydrodipicolinate + L-glutamate + H2O + H(+). The protein operates within amino-acid biosynthesis; L-lysine biosynthesis via DAP pathway; LL-2,6-diaminopimelate from (S)-tetrahydrodipicolinate (aminotransferase route): step 1/1. Functionally, involved in the synthesis of meso-diaminopimelate (m-DAP or DL-DAP), required for both lysine and peptidoglycan biosynthesis. Catalyzes the direct conversion of tetrahydrodipicolinate to LL-diaminopimelate. This Chlamydia felis (strain Fe/C-56) (Chlamydophila felis) protein is LL-diaminopimelate aminotransferase.